The primary structure comprises 461 residues: Photosystem II CP43 reaction center protein (461 aa).

Positions 1-2 (ME) are excised as a propeptide. Threonine 3 carries the post-translational modification N-acetylthreonine. Threonine 3 carries the phosphothreonine modification. A run of 5 helical transmembrane segments spans residues 57–81 (LFEV…PHLA), 122–143 (IIGP…KDKN), 166–188 (KAMF…RVIS), 243–263 (KPFS…LSYS), and 279–300 (WFNN…ASQA). Glutamate 355 is a [CaMn4O5] cluster binding site. Residues 435-459 (RARAASGGFEKGLDRENEPVLSMKL) traverse the membrane as a helical segment.

Belongs to the PsbB/PsbC family. PsbC subfamily. PSII is composed of 1 copy each of membrane proteins PsbA, PsbB, PsbC, PsbD, PsbE, PsbF, PsbH, PsbI, PsbJ, PsbK, PsbL, PsbM, PsbT, PsbX, PsbY, PsbZ, Psb30/Ycf12, at least 3 peripheral proteins of the oxygen-evolving complex and a large number of cofactors. It forms dimeric complexes. Binds multiple chlorophylls and provides some of the ligands for the Ca-4Mn-5O cluster of the oxygen-evolving complex. It may also provide a ligand for a Cl- that is required for oxygen evolution. PSII binds additional chlorophylls, carotenoids and specific lipids. serves as cofactor.

The protein resides in the plastid. It localises to the cyanelle thylakoid membrane. One of the components of the core complex of photosystem II (PSII). It binds chlorophyll and helps catalyze the primary light-induced photochemical processes of PSII. PSII is a light-driven water:plastoquinone oxidoreductase, using light energy to abstract electrons from H(2)O, generating O(2) and a proton gradient subsequently used for ATP formation. In Cyanophora paradoxa, this protein is Photosystem II CP43 reaction center protein.